The sequence spans 159 residues: Protein NrdI (159 aa).

It belongs to the NrdI family.

Its function is as follows. Probably involved in ribonucleotide reductase function. The chain is Protein NrdI from Rhodococcus erythropolis (strain PR4 / NBRC 100887).